Reading from the N-terminus, the 274-residue chain is Shikimate dehydrogenase (NADP(+)) (274 aa).

Residues 20-22 (SKS) and T68 contribute to the shikimate site. Catalysis depends on K72, which acts as the Proton acceptor. Residue D84 participates in NADP(+) binding. Residues N93 and D109 each coordinate shikimate. NADP(+) is bound by residues 131–135 (GAGGA) and L217. A shikimate-binding site is contributed by Y219. G240 is a binding site for NADP(+).

This sequence belongs to the shikimate dehydrogenase family. Homodimer.

The enzyme catalyses shikimate + NADP(+) = 3-dehydroshikimate + NADPH + H(+). Its pathway is metabolic intermediate biosynthesis; chorismate biosynthesis; chorismate from D-erythrose 4-phosphate and phosphoenolpyruvate: step 4/7. Its function is as follows. Involved in the biosynthesis of the chorismate, which leads to the biosynthesis of aromatic amino acids. Catalyzes the reversible NADPH linked reduction of 3-dehydroshikimate (DHSA) to yield shikimate (SA). The polypeptide is Shikimate dehydrogenase (NADP(+)) (Sphingopyxis alaskensis (strain DSM 13593 / LMG 18877 / RB2256) (Sphingomonas alaskensis)).